Here is a 114-residue protein sequence, read N- to C-terminus: Class I hydrophobin 1 (114 aa).

An N-terminal signal peptide occupies residues 1 to 20 (MQFTKMSAFATLALATLAAA). Intrachain disulfides connect Cys-33–Cys-93, Cys-40–Cys-87, Cys-41–Cys-74, and Cys-94–Cys-107.

The protein belongs to the fungal hydrophobin family. In terms of assembly, self-assembles to form functional amyloid fibrils called rodlets. Self-assembly into fibrillar rodlets occurs spontaneously at hydrophobic:hydrophilic interfaces and the rodlets further associate laterally to form amphipathic monolayers.

The protein resides in the secreted. It localises to the cell wall. Aerial growth, conidiation, and dispersal of filamentous fungi in the environment rely upon a capability of their secreting small amphipathic proteins called hydrophobins (HPBs) with low sequence identity. Class I can self-assemble into an outermost layer of rodlet bundles on aerial cell surfaces, conferring cellular hydrophobicity that supports fungal growth, development and dispersal; whereas Class II form highly ordered films at water-air interfaces through intermolecular interactions but contribute nothing to the rodlet structure. Pnh1 is a class I hydrophobin that might be involved in the attachment of the hydrophilic wall of hyphae to the hydrophobic surface of wood under inorganic phosphate (Pi)-deficient conditions and enable the mycelium to degrade efficiently the components of wood and to acquire nutrients containing Pi. This is Class I hydrophobin 1 from Pholiota nameko.